The chain runs to 352 residues: Dysbindin (352 aa).

Residue Ser11 is modified to Phosphoserine. A coiled-coil region spans residues 88–176; it reads EKKRTSLNEL…EAFKAELDTE (89 aa). A dysbindin region spans residues 173–325; it reads LDTEHTQKAL…DEEEVQVDTA (153 aa). The short motif at 243–256 is the Nuclear export signal element; that stretch reads LMDISDQEALDVFL. The interval 267-352 is disordered; it reads SPGVEMESNP…SDQCDSTQDI (86 aa). Over residues 274-285 the composition is skewed to polar residues; it reads SNPNQNEMSLQI. The segment covering 286–301 has biased composition (low complexity); sequence PSPSESASQPPASPSA. Ser315, Ser340, and Ser343 each carry phosphoserine.

Belongs to the dysbindin family. In terms of assembly, interacts with AP3M1 and TRIM32. Interacts (isoform 1 and isoform 2 only) with the DNA-dependent protein kinase complex DNA-PK; the interaction phosphorylates DTNBP1 in vitro. Interacts directly in this complex with XRCC5 and XRCC6. Interacts with XPO1; the interaction exports DTNBP1 out of the nucleus. Component of the biogenesis of lysosome-related organelles complex 1 (BLOC-1) composed of BLOC1S1, BLOC1S2, BLOC1S3, BLOC1S4, BLOC1S5, BLOC1S6, DTNBP1/BLOC1S7 and SNAPIN/BLOC1S8. The BLOC-1 complex associates with the AP-3 protein complex and membrane protein cargos. This BLOC-1 complex also associates with the BLOC-2 complex in endosomes. Binds to DTNA and DTNB but may not be a physiological binding partner. Interacts (via its coiled coil domain) with KXD1. Interacts with AP3B2, BLOC1S5, BLOC1S6, CMYA5, PI4K2, RNF151 and SNAPIN/BLOC1S8. Interacts with XPO1; the interaction exports DTNBP1 out of the nucleus. Ubiquitinated by TRIM32. Ubiquitination leads to DTNBP1 degradation. In terms of tissue distribution, detected in brain, in hippocampus and dentate gyrus neurons. Detected at axon bundles and axon terminals, notably in the cerebellum and hippocampus. Detected in neuropil in hippocampus, lateral septum, basal ganglia and substantia nigra. Highly expressed in pyramidal cells of hippocampus CA2 and CA3. Detected at the heart and skeletal muscle sarcolemma (at protein level). Ubiquitously expressed. The highest expression is observed in testis, liver, kidney, brain, heart and lung. Expressed at lower levels in stomach and small intestine.

It is found in the cytoplasm. It localises to the cytoplasmic vesicle membrane. The protein localises to the endosome membrane. The protein resides in the melanosome membrane. Its subcellular location is the postsynaptic density. It is found in the endoplasmic reticulum. It localises to the nucleus. The protein localises to the cytoplasmic vesicle. The protein resides in the secretory vesicle. Its subcellular location is the synaptic vesicle membrane. It is found in the postsynaptic cell membrane. In terms of biological role, component of the BLOC-1 complex, a complex that is required for normal biogenesis of lysosome-related organelles (LRO), such as platelet dense granules and melanosomes. In concert with the AP-3 complex, the BLOC-1 complex is required to target membrane protein cargos into vesicles assembled at cell bodies for delivery into neurites and nerve terminals. The BLOC-1 complex, in association with SNARE proteins, is also proposed to be involved in neurite extension. Associates with the BLOC-2 complex to facilitate the transport of TYRP1 independent of AP-3 function. Plays a role in synaptic vesicle trafficking and in neurotransmitter release. Plays a role in the regulation of cell surface exposure of DRD2. May play a role in actin cytoskeleton reorganization and neurite outgrowth. May modulate MAPK8 phosphorylation. Appears to promote neuronal transmission and viability through regulating the expression of SNAP25 and SYN1, modulating PI3-kinase-Akt signaling and influencing glutamatergic release. Regulates the expression of SYN1 through binding to its promoter. Modulates prefrontal cortical activity via the dopamine/D2 pathway. This is Dysbindin (Dtnbp1) from Mus musculus (Mouse).